A 451-amino-acid chain; its full sequence is Glycosyltransferase-like At2g41451 (451 aa).

The signal sequence occupies residues 1-23 (MASSDSSYSRKFLLITFLPLSLA). 5 N-linked (GlcNAc...) asparagine glycosylation sites follow: Asn-36, Asn-137, Asn-168, Asn-441, and Asn-444. In terms of domain architecture, GT92 spans 109–345 (QTLPWIFYHK…TYSKFSDLTS (237 aa)).

It belongs to the glycosyltransferase 92 family.

It localises to the secreted. The protein localises to the cell wall. The protein resides in the cytoplasm. It is found in the cell membrane. In terms of biological role, involved in the coordination between cell elongation and cellulose synthesis by promoting the expression of genes involved in cell elongation and cellulose synthesis. Acts as a regulator of plasmodesmatal permeability. Maybe a glycosyltransferase. The protein is Glycosyltransferase-like At2g41451 of Arabidopsis thaliana (Mouse-ear cress).